Reading from the N-terminus, the 193-residue chain is uncharacterized protein (193 aa).

This is an uncharacterized protein from Bacillus subtilis (strain 168).